The following is a 340-amino-acid chain: Ketol-acid reductoisomerase (NADP(+)) (340 aa).

A KARI N-terminal Rossmann domain is found at 1–182 (MRVYYDRDCD…GGGRSGIIET (182 aa)). NADP(+) contacts are provided by residues 24-27 (YGSQ), Arg48, Ser51, Ser53, and 83-86 (DELQ). The active site involves His108. Gly134 is a binding site for NADP(+). Residues 183 to 329 (NFRQECETDL…EKLRGMMPWI (147 aa)) enclose the KARI C-terminal knotted domain. Mg(2+) contacts are provided by Asp191, Glu195, Glu227, and Glu231. Ser252 contributes to the substrate binding site.

It belongs to the ketol-acid reductoisomerase family. Requires Mg(2+) as cofactor.

It catalyses the reaction (2R)-2,3-dihydroxy-3-methylbutanoate + NADP(+) = (2S)-2-acetolactate + NADPH + H(+). The enzyme catalyses (2R,3R)-2,3-dihydroxy-3-methylpentanoate + NADP(+) = (S)-2-ethyl-2-hydroxy-3-oxobutanoate + NADPH + H(+). It functions in the pathway amino-acid biosynthesis; L-isoleucine biosynthesis; L-isoleucine from 2-oxobutanoate: step 2/4. It participates in amino-acid biosynthesis; L-valine biosynthesis; L-valine from pyruvate: step 2/4. Functionally, involved in the biosynthesis of branched-chain amino acids (BCAA). Catalyzes an alkyl-migration followed by a ketol-acid reduction of (S)-2-acetolactate (S2AL) to yield (R)-2,3-dihydroxy-isovalerate. In the isomerase reaction, S2AL is rearranged via a Mg-dependent methyl migration to produce 3-hydroxy-3-methyl-2-ketobutyrate (HMKB). In the reductase reaction, this 2-ketoacid undergoes a metal-dependent reduction by NADPH to yield (R)-2,3-dihydroxy-isovalerate. This chain is Ketol-acid reductoisomerase (NADP(+)), found in Paracoccus denitrificans (strain Pd 1222).